Consider the following 386-residue polypeptide: MAIRKSQVYLSTVNSYLIDSPQPSTINYWYNTGSLTGLCLVIQIASGIFTAMHYSSHIDLAFASVEHIMRDVNYGYLIRYIHANGASFFFVCMYGHIGKALYYGSYKSPRVLVWVIGVIIFITTMATAFTGYCCVYGQMSHWGATVITNTLSAIPFIGNDLVPFIWGSFSVSNPTIQRFFALHYLCPFILAALVVMHLMALHVHGSTNPLGISSNIDRLPFHGYFVFKDLVTVFVFLLIFSTFVFFSPNTLGHPDNYIPGNPLVTPASIVPEWYTLPFYAILRSIPDKLGGVIAMFGSILITLVLPVTDRSVIKGNTFKIFSKTLYFTFTYNFILLGQLGQLHVEVPFIEMGQIATFNYFTYFIVLVPLVSTLENILFYIGRVTTK.

Helical transmembrane passes span 32–52 (TGSL…FTAM), 76–98 (YLIR…GHIG), 113–133 (VWVI…TGYC), and 179–199 (FFAL…MHLM). Positions 82 and 96 each coordinate heme b. Residues His183 and His197 each coordinate heme b. His202 is a binding site for a ubiquinone. 4 consecutive transmembrane segments (helical) span residues 225-245 (FVFK…TFVF), 289-309 (LGGV…PVTD), 321-341 (FSKT…QLGQ), and 348-368 (FIEM…VLVP).

It belongs to the cytochrome b family. Fungal cytochrome b-c1 complex contains 10 subunits; 3 respiratory subunits, 2 core proteins and 5 low-molecular weight proteins. Cytochrome b-c1 complex is a homodimer. Heme b serves as cofactor.

Its subcellular location is the mitochondrion inner membrane. Functionally, component of the ubiquinol-cytochrome c reductase complex (complex III or cytochrome b-c1 complex) that is part of the mitochondrial respiratory chain. The b-c1 complex mediates electron transfer from ubiquinol to cytochrome c. Contributes to the generation of a proton gradient across the mitochondrial membrane that is then used for ATP synthesis. The sequence is that of Cytochrome b (COB) from Wickerhamomyces pijperi (Yeast).